The chain runs to 133 residues: MDLEYQKKLAAKVAGVGLDRVRINPEKIDLVSEAVTRADIRRLIRSGAIEILQKRGISGARKKPRRKGPGSRKGGKYSKLPRKRRWIRKIRALRRELRRMKEQGLIDSKEYRELYAKLSSFNSVSQLRAHVGR.

The interval 55–83 is disordered; the sequence is RGISGARKKPRRKGPGSRKGGKYSKLPRK. The span at 60 to 83 shows a compositional bias: basic residues; it reads ARKKPRRKGPGSRKGGKYSKLPRK.

It belongs to the eukaryotic ribosomal protein eL19 family. Part of the 50S ribosomal subunit.

Its function is as follows. Binds to the 23S rRNA. The sequence is that of Large ribosomal subunit protein eL19 from Korarchaeum cryptofilum (strain OPF8).